We begin with the raw amino-acid sequence, 260 residues long: MNHVVLSGRNISMKYGHRLVLDDISIDIRAGEVTALLGPNGAGKSTLLKLLCGEVPSHNEIDYFGEPKEAWKPEEIAKHLAMLPQHSTLTFPFLAREVVELGAIPLSLSNKETTELALHYMQKTDVLHLAESLYPALSGGEKQRLHLARVLTQLHQSGDKKILMLDEPTSALDLAHQHNTLKIAREAAKAQNAAVVVVLHDLNLASQYADRLVLLHNGKLVCDDNPWQALTPERIEQVYGYRSIVTKHPTLDFPQVHAAA.

The region spanning 6–242 (LSGRNISMKY…ERIEQVYGYR (237 aa)) is the ABC transporter domain. An ATP-binding site is contributed by 38 to 45 (GPNGAGKS).

It belongs to the ABC transporter superfamily. Heme (hemin) importer (TC 3.A.1.14.5) family. The complex is composed of two ATP-binding proteins (HmuV), two transmembrane proteins (HmuU) and a solute-binding protein (HmuT).

It localises to the cell inner membrane. In terms of biological role, part of the ABC transporter complex HmuTUV involved in hemin import. Responsible for energy coupling to the transport system. The chain is Hemin import ATP-binding protein HmuV from Vibrio parahaemolyticus serotype O3:K6 (strain RIMD 2210633).